Consider the following 146-residue polypeptide: 3-dehydroquinate dehydratase (146 aa).

The active-site Proton acceptor is the tyrosine 23. Asparagine 74, histidine 80, and aspartate 87 together coordinate substrate. The Proton donor role is filled by histidine 100. Substrate is bound by residues 101–102 and arginine 111; that span reads IS.

Belongs to the type-II 3-dehydroquinase family. In terms of assembly, homododecamer.

It carries out the reaction 3-dehydroquinate = 3-dehydroshikimate + H2O. Its pathway is metabolic intermediate biosynthesis; chorismate biosynthesis; chorismate from D-erythrose 4-phosphate and phosphoenolpyruvate: step 3/7. Functionally, catalyzes a trans-dehydration via an enolate intermediate. The sequence is that of 3-dehydroquinate dehydratase from Bacillus cereus (strain G9842).